The chain runs to 114 residues: T cell receptor beta variable 9 (114 aa).

Residues M1–S21 form the signal peptide. The Ig-like domain occupies G22–V114. A disulfide bridge links C42 with C110. N-linked (GlcNAc...) asparagine glycosylation is present at N96.

As to quaternary structure, alpha-beta TR is a heterodimer composed of an alpha and beta chain; disulfide-linked. The alpha-beta TR is associated with the transmembrane signaling CD3 coreceptor proteins to form the TR-CD3 (TcR or TCR). The assembly of alpha-beta TR heterodimers with CD3 occurs in the endoplasmic reticulum where a single alpha-beta TR heterodimer associates with one CD3D-CD3E heterodimer, one CD3G-CD3E heterodimer and one CD247 homodimer forming a stable octameric structure. CD3D-CD3E and CD3G-CD3E heterodimers preferentially associate with TR alpha and TR beta chains, respectively. The association of the CD247 homodimer is the last step of TcR assembly in the endoplasmic reticulum and is required for transport to the cell surface.

The protein resides in the cell membrane. In terms of biological role, v region of the variable domain of T cell receptor (TR) beta chain that participates in the antigen recognition. Alpha-beta T cell receptors are antigen specific receptors which are essential to the immune response and are present on the cell surface of T lymphocytes. Recognize peptide-major histocompatibility (MH) (pMH) complexes that are displayed by antigen presenting cells (APC), a prerequisite for efficient T cell adaptive immunity against pathogens. Binding of alpha-beta TR to pMH complex initiates TR-CD3 clustering on the cell surface and intracellular activation of LCK that phosphorylates the ITAM motifs of CD3G, CD3D, CD3E and CD247 enabling the recruitment of ZAP70. In turn ZAP70 phosphorylates LAT, which recruits numerous signaling molecules to form the LAT signalosome. The LAT signalosome propagates signal branching to three major signaling pathways, the calcium, the mitogen-activated protein kinase (MAPK) kinase and the nuclear factor NF-kappa-B (NF-kB) pathways, leading to the mobilization of transcription factors that are critical for gene expression and essential for T cell growth and differentiation. The T cell repertoire is generated in the thymus, by V-(D)-J rearrangement. This repertoire is then shaped by intrathymic selection events to generate a peripheral T cell pool of self-MH restricted, non-autoaggressive T cells. Post-thymic interaction of alpha-beta TR with the pMH complexes shapes TR structural and functional avidity. This is T cell receptor beta variable 9 from Homo sapiens (Human).